The chain runs to 400 residues: Phosphoglycerate kinase (400 aa).

Substrate is bound by residues 20-22 (DLN), R35, 58-61 (HQGR), R115, and R155. ATP contacts are provided by residues E330 and 356 to 359 (GGDT).

The protein belongs to the phosphoglycerate kinase family. As to quaternary structure, monomer.

The protein localises to the cytoplasm. It catalyses the reaction (2R)-3-phosphoglycerate + ATP = (2R)-3-phospho-glyceroyl phosphate + ADP. It participates in carbohydrate degradation; glycolysis; pyruvate from D-glyceraldehyde 3-phosphate: step 2/5. The polypeptide is Phosphoglycerate kinase (Haloarcula marismortui (strain ATCC 43049 / DSM 3752 / JCM 8966 / VKM B-1809) (Halobacterium marismortui)).